A 345-amino-acid chain; its full sequence is Opioid-binding protein/cell adhesion molecule (345 aa).

The first 27 residues, 1 to 27, serve as a signal peptide directing secretion; that stretch reads MGVCGSLFQPWKCLVVVSLRLLFLVPT. Ig-like C2-type domains follow at residues 39–126, 136–219, and 223–310; these read PKAM…PKTS, PQIM…VKIT, and PPYI…ASIT. N-linked (GlcNAc...) asparagine glycosylation is found at Asn44, Asn70, and Asn140. An intrachain disulfide couples Cys57 to Cys115. 2 disulfide bridges follow: Cys157–Cys202 and Cys244–Cys296. Residues Asn285, Asn293, and Asn306 are each glycosylated (N-linked (GlcNAc...) asparagine). Residue Asn322 is the site of GPI-anchor amidated asparagine attachment. The propeptide at 323–345 is removed in mature form; it reads SASRALACLWLSGTLFAHFFIKF.

It belongs to the immunoglobulin superfamily. IgLON family.

It localises to the cell membrane. Binds opioids in the presence of acidic lipids; probably involved in cell contact. The sequence is that of Opioid-binding protein/cell adhesion molecule (OPCML) from Bos taurus (Bovine).